A 147-amino-acid polypeptide reads, in one-letter code: MFQGSHAITMDAKGRMAIPAKYRDTLADACEGRIVVTAHTQDRCLLVYPETEWAEILPKIEALPSFNKAALRAQRLLIGYATTLELDGNGRVLLPPTLRDYANFDKKLMLVGLGKKFELWSEEAWFASIADVDDGDELPQEMLTLSL.

SpoVT-AbrB domains follow at residues 5–52 and 81–124; these read SHAI…PETE and ATTL…SEEA.

It belongs to the MraZ family. In terms of assembly, forms oligomers.

It is found in the cytoplasm. Its subcellular location is the nucleoid. This is Transcriptional regulator MraZ from Saccharophagus degradans (strain 2-40 / ATCC 43961 / DSM 17024).